A 249-amino-acid chain; its full sequence is tRNA (guanine-N(1)-)-methyltransferase (249 aa).

S-adenosyl-L-methionine contacts are provided by residues G112 and 132–137 (LGDFVL).

It belongs to the RNA methyltransferase TrmD family. As to quaternary structure, homodimer.

The protein resides in the cytoplasm. It catalyses the reaction guanosine(37) in tRNA + S-adenosyl-L-methionine = N(1)-methylguanosine(37) in tRNA + S-adenosyl-L-homocysteine + H(+). Its function is as follows. Specifically methylates guanosine-37 in various tRNAs. The sequence is that of tRNA (guanine-N(1)-)-methyltransferase from Citrifermentans bemidjiense (strain ATCC BAA-1014 / DSM 16622 / JCM 12645 / Bem) (Geobacter bemidjiensis).